The primary structure comprises 1225 residues: MSSPLQRAVGDTKRALSASSSSSASLPFDDRDSNHTSEGNGDSLLADEDTDFEDSLNRNVKKRAAKRPPKTTPVAKHPKKGSRVVHRHSRKQSEPPANDLFNAVKAAKSDMQSLVDEWLDSYKQDQDAGFLELVNFFIQSCGCKGIVTPEMFKKMSNSEIIQHLTEQFNEDSGDYPLIAPGPSWKKFQGSFCEFVRTLVCQCQYSLLYDGFPMDDLISLLTGLSDSQVRAFRHTSTLAAMKLMTSLVKVALQLSVHQDNNQRQYEAERNKGPGQRAPERLESLLEKRKELQEHQEEIEGMMNALFRGVFVHRYRDVLPEIRAICIEEIGCWMQSYSTSFLTDSYLKYIGWTLHDKHREVRLKCVKALKGLYGNRDLTTRLELFTSRFKDRMVSMVMDREYDVAVEAVRLLILILKNMEGVLTDADCESVYPVVYASHRGLASAAGEFLYWKLFYPECEIRMMGGREQRQSPGAQRTFFQLLLSFFVESELHDHAAYLVDSLWDCAGARLKDWEGLTSLLLEKDQNLGDVQESTLIEILVSSARQASEGHPPVGRVTGRKGLTSKERKTQADDRVKLTEHLIPLLPQLLAKFSADAEKVTPLLQLLSCFDLHIYCTGRLEKHLELFLQQLQEVVVKHAEPAVLEAGAHALYLLCNPEFTFFSRADFARSQLVDLLTDRFQQELEELLQSSFLDEDEVYNLAATLKRLSAFYNTHDLTRWELYEPCCQLLQKAVDTGEVPHQVILPALTLVYFSILWTLTHISKSDASQKQLSSLRDRMVAFCELCQSCLSDVDTEIQEQAFVLLSDLLLIFSPQMIVGGRDFLRPLVFFPEATLQSELASFLMDHVFIQPGDLGSGDSQEDHLQIERLHQRRRLLAGFCKLLLYGVLEMDAASDVFKHYNKFYNDYGDIIKETLTRARQIDRSHCSRILLLSLKQLYTELLQEHGPQGLNELPAFIEMRDLARRFALSFGPQQLQNRDLVVMLHKEGIQFSLSELPPAGSSNQPPNLAFLELLSEFSPRLFHQDKQLLLSYLEKCLQHVSQAPGHPWGPVTTYCHSLSPVENTAETSPQVLPSSKRRRVEGPAKPNREDVSSSQEESLQLNSIPPTPTLTSTAVKSRQPLWGLKEMEEEDGSELDFAQGQPVAGTERSRFLGPQYFQTPHNPSGPGLGNQLMRLSLMEEDEEEELEIQDESNEERQDTDMQASSYSSTSERGLDLLDSTELDIEDF.

The segment at methionine 1–alanine 97 is disordered. Over residues alanine 15–leucine 26 the composition is skewed to low complexity. Residues leucine 45–aspartate 54 are compositionally biased toward acidic residues. Composition is skewed to basic residues over residues asparagine 59–proline 69 and lysine 76–arginine 90. Residues phenylalanine 309–methionine 394 form the SCD domain. 3 disordered regions span residues serine 546–lysine 567, alanine 1063–valine 1113, and glutamate 1177–phenylalanine 1225. Basic and acidic residues predominate over residues valine 1078–valine 1089. Residues serine 1090 to leucine 1099 show a composition bias toward low complexity. Acidic residues predominate over residues glutamate 1177–asparagine 1191. Positions aspartate 1198–glutamate 1209 are enriched in polar residues. The residue at position 1203 (serine 1203) is a Phosphoserine. Positions aspartate 1216–phenylalanine 1225 are enriched in acidic residues.

It belongs to the SCC3 family. As to quaternary structure, component of the meiosis-specific cohesin complex, which also contains the SMC1 (SMC1A or SMC1B) and SMC3 heterodimer. Such complex likely contains RAD21, or the meiosis-specific related protein REC8. Interacts with CCDC79/TERB1; recruiting cohesin to telomeres to develop structural rigidity. In terms of processing, phosphorylated. In terms of tissue distribution, testis specific.

Its subcellular location is the nucleus. The protein resides in the chromosome. The protein localises to the centromere. Functionally, meiosis specific component of cohesin complex. The cohesin complex is required for the cohesion of sister chromatids after DNA replication. The cohesin complex apparently forms a large proteinaceous ring within which sister chromatids can be trapped. At anaphase, the complex is cleaved and dissociates from chromatin, allowing sister chromatids to segregate. The meiosis-specific cohesin complex probably replaces mitosis specific cohesin complex when it dissociates from chromatin during prophase I. This is Cohesin subunit SA-3 (STAG3) from Homo sapiens (Human).